Reading from the N-terminus, the 813-residue chain is Ribosome-releasing factor 2, mitochondrial (813 aa).

Residues 1 to 20 (MLRIVWKPLKIRLPVWRRYQ) constitute a mitochondrion transit peptide. The tr-type G domain occupies 26 to 314 (NSIRNVGIIA…AIIDYLPSPV (289 aa)). GTP contacts are provided by residues 35-42 (AHIDAGKT), 99-103 (DTPGH), and 153-156 (NKMD).

This sequence belongs to the TRAFAC class translation factor GTPase superfamily. Classic translation factor GTPase family. EF-G/EF-2 subfamily.

It is found in the mitochondrion. In terms of biological role, mitochondrial GTPase that mediates the disassembly of ribosomes from messenger RNA at the termination of mitochondrial protein biosynthesis. Not involved in the GTP-dependent ribosomal translocation step during translation elongation. The chain is Ribosome-releasing factor 2, mitochondrial (mef2) from Schizosaccharomyces pombe (strain 972 / ATCC 24843) (Fission yeast).